The chain runs to 297 residues: Phosphatidylinositol N-acetylglucosaminyltransferase subunit C (297 aa).

The next 8 helical transmembrane spans lie at 51-71 (VVFE…FVVI), 80-100 (LAPH…YVLF), 117-137 (WADL…SPVL), 153-173 (SVFM…AAIV), 174-194 (SSTL…SRLP), 196-216 (SLHA…WPML), 227-244 (SYVG…GGLL), and 250-270 (GAVL…FYLI).

The protein belongs to the PIGC family. As to quaternary structure, component of the glycosylphosphatidylinositol-N-acetylglucosaminyltransferase (GPI-GnT) complex composed at least by PIGA, PIGC, PIGH, PIGP, PIGQ, PIGY and DPM2. Interacts with PIGQ. Interacts with the heterodimer PIGA:PIGH.

It is found in the endoplasmic reticulum membrane. It functions in the pathway glycolipid biosynthesis; glycosylphosphatidylinositol-anchor biosynthesis. Its function is as follows. Part of the glycosylphosphatidylinositol-N-acetylglucosaminyltransferase (GPI-GnT) complex that catalyzes the transfer of N-acetylglucosamine from UDP-N-acetylglucosamine to phosphatidylinositol and participates in the first step of GPI biosynthesis. The protein is Phosphatidylinositol N-acetylglucosaminyltransferase subunit C of Homo sapiens (Human).